A 377-amino-acid polypeptide reads, in one-letter code: 23S rRNA (uracil(747)-C(5))-methyltransferase RlmC (377 aa).

4 residues coordinate [4Fe-4S] cluster: C3, C11, C14, and C87. 4 residues coordinate S-adenosyl-L-methionine: Q212, F241, E262, and N307. The Nucleophile role is filled by C334.

It belongs to the class I-like SAM-binding methyltransferase superfamily. RNA M5U methyltransferase family. RlmC subfamily.

It carries out the reaction uridine(747) in 23S rRNA + S-adenosyl-L-methionine = 5-methyluridine(747) in 23S rRNA + S-adenosyl-L-homocysteine + H(+). Functionally, catalyzes the formation of 5-methyl-uridine at position 747 (m5U747) in 23S rRNA. The protein is 23S rRNA (uracil(747)-C(5))-methyltransferase RlmC of Xenorhabdus bovienii (strain SS-2004) (Xenorhabdus nematophila subsp. bovienii).